Consider the following 148-residue polypeptide: MADQHRGVIGGGGYGDRGGQEQQEKQPFMMTALKTVTAATAGGSMLVLSGLILAGTVIALTVATPVLVIFSPVLVPAAIALALMAAGFVTSGGLGVAALSVFSWMYKYLTGKHPPGADQLDHAKARLASKARDIKEAAQHRIDQAQAS.

The interval 1–21 (MADQHRGVIGGGGYGDRGGQE) is disordered. An N-acetylalanine modification is found at alanine 2. The segment at 2–34 (ADQHRGVIGGGGYGDRGGQEQQEKQPFMMTALK) is polar. Residues 8–17 (VIGGGGYGDR) are compositionally biased toward gly residues. The tract at residues 35 to 106 (TVTAATAGGS…AALSVFSWMY (72 aa)) is hydrophobic. Transmembrane regions (helical) follow at residues 43-63 (GSML…LTVA), 66-86 (VLVI…LMAA), and 87-107 (GFVT…WMYK).

Belongs to the oleosin family.

It localises to the lipid droplet. It is found in the membrane. In terms of biological role, may have a structural role to stabilize the lipid body during desiccation of the seed by preventing coalescence of the oil. Probably interacts with both lipid and phospholipid moieties of lipid bodies. May also provide recognition signals for specific lipase anchorage in lipolysis during seedling growth. This chain is Oleosin 16 kDa (OLE16), found in Oryza sativa subsp. japonica (Rice).